Here is a 261-residue protein sequence, read N- to C-terminus: Ribonuclease HII (261 aa).

The RNase H type-2 domain occupies Lys71–Ser259. A divalent metal cation-binding residues include Asp77, Glu78, and Asp169.

It belongs to the RNase HII family. Mn(2+) is required as a cofactor. Mg(2+) serves as cofactor.

It is found in the cytoplasm. The catalysed reaction is Endonucleolytic cleavage to 5'-phosphomonoester.. Its function is as follows. Endonuclease that specifically degrades the RNA of RNA-DNA hybrids. The protein is Ribonuclease HII of Listeria monocytogenes serovar 1/2a (strain ATCC BAA-679 / EGD-e).